Consider the following 151-residue polypeptide: 3-hydroxyacyl-[acyl-carrier-protein] dehydratase FabZ (151 aa).

Histidine 58 is a catalytic residue.

Belongs to the thioester dehydratase family. FabZ subfamily.

It localises to the cytoplasm. The enzyme catalyses a (3R)-hydroxyacyl-[ACP] = a (2E)-enoyl-[ACP] + H2O. In terms of biological role, involved in unsaturated fatty acids biosynthesis. Catalyzes the dehydration of short chain beta-hydroxyacyl-ACPs and long chain saturated and unsaturated beta-hydroxyacyl-ACPs. The polypeptide is 3-hydroxyacyl-[acyl-carrier-protein] dehydratase FabZ (Histophilus somni (strain 129Pt) (Haemophilus somnus)).